The primary structure comprises 71 residues: Large ribosomal subunit protein bL31 (71 aa).

Zn(2+) is bound by residues cysteine 16, cysteine 18, cysteine 37, and cysteine 40.

This sequence belongs to the bacterial ribosomal protein bL31 family. Type A subfamily. Part of the 50S ribosomal subunit. Requires Zn(2+) as cofactor.

Binds the 23S rRNA. In Pseudomonas aeruginosa (strain LESB58), this protein is Large ribosomal subunit protein bL31.